A 258-amino-acid chain; its full sequence is Acetylglutamate kinase (258 aa).

Substrate contacts are provided by residues 41-42 (GG), Arg63, and Asn156.

This sequence belongs to the acetylglutamate kinase family. ArgB subfamily.

Its subcellular location is the cytoplasm. It catalyses the reaction N-acetyl-L-glutamate + ATP = N-acetyl-L-glutamyl 5-phosphate + ADP. Its pathway is amino-acid biosynthesis; L-arginine biosynthesis; N(2)-acetyl-L-ornithine from L-glutamate: step 2/4. Functionally, catalyzes the ATP-dependent phosphorylation of N-acetyl-L-glutamate. The polypeptide is Acetylglutamate kinase (Bacillus amyloliquefaciens (Bacillus velezensis)).